Reading from the N-terminus, the 459-residue chain is Disease resistance protein CHL1 (459 aa).

One can recognise a TIR domain in the interval Arg-16–Val-170. Glu-89 is a catalytic residue. The NB-ARC domain maps to Val-191–Gly-401. A compositionally biased stretch (basic and acidic residues) spans Glu-429–Gln-440. A disordered region spans residues Glu-429 to Gln-459.

In terms of tissue distribution, mostly expressed in leaves, stems and roots, and, to a lower extent, in flowers and siliques.

It localises to the cytoplasm. The catalysed reaction is NAD(+) + H2O = ADP-D-ribose + nicotinamide + H(+). In terms of biological role, confers resistance to low temperatures by limiting chloroplast damage and cell death, thus maintaining growth homeostasis. In Arabidopsis thaliana (Mouse-ear cress), this protein is Disease resistance protein CHL1.